The following is a 65-amino-acid chain: Putative beta-neurotoxin RjAa12 (65 aa).

In terms of domain architecture, LCN-type CS-alpha/beta spans 1-64; the sequence is KEGYPVGRDG…VWDSSTNKCG (64 aa). Intrachain disulfides connect Cys11–Cys63, Cys15–Cys37, Cys22–Cys44, and Cys26–Cys46.

Belongs to the long (4 C-C) scorpion toxin superfamily. Sodium channel inhibitor family. Beta subfamily. Expressed by the venom gland.

The protein localises to the secreted. Functionally, beta toxins bind voltage-independently at site-4 of sodium channels (Nav) and shift the voltage of activation toward more negative potentials thereby affecting sodium channel activation and promoting spontaneous and repetitive firing. This chain is Putative beta-neurotoxin RjAa12, found in Rhopalurus junceus (Caribbean blue scorpion).